The following is a 394-amino-acid chain: RILP-like protein 1 (394 aa).

The 88-residue stretch at 2–89 (EGISALEKNV…RLERMDRIEK (88 aa)) folds into the RH1 domain. Positions 68–327 (EMEELRLELD…EAEEENKLPQ (260 aa)) form a coiled coil. Residues 282–347 (RPRFTLQELR…IPQESGIKRL (66 aa)) form the RH2 domain.

This sequence belongs to the RILPL family.

It localises to the cytoplasm. The protein localises to the cytosol. Its subcellular location is the cytoskeleton. The protein resides in the microtubule organizing center. It is found in the centrosome. It localises to the cell projection. The protein localises to the cilium. In terms of biological role, plays a role in the regulation of cell shape and polarity. Plays a role in cellular protein transport, including protein transport away from primary cilia. Neuroprotective protein. The chain is RILP-like protein 1 (rilpl1) from Xenopus laevis (African clawed frog).